Here is a 258-residue protein sequence, read N- to C-terminus: 5'-nucleotidase SurE (258 aa).

A divalent metal cation is bound by residues Asp-13, Asp-14, Ser-44, and Asn-92. Positions 237 to 258 (SPLTAPHSTEHHDALDGIATEF) are disordered.

The protein belongs to the SurE nucleotidase family. The cofactor is a divalent metal cation.

The protein localises to the cytoplasm. The catalysed reaction is a ribonucleoside 5'-phosphate + H2O = a ribonucleoside + phosphate. In terms of biological role, nucleotidase that shows phosphatase activity on nucleoside 5'-monophosphates. In Halobacterium salinarum (strain ATCC 29341 / DSM 671 / R1), this protein is 5'-nucleotidase SurE.